The chain runs to 459 residues: Sorting nexin-8 (459 aa).

A disordered region spans residues 1 to 37; it reads MTGRAMDPLPSPAVAAAAEAEADEEADPPATGPRTSQ. In terms of domain architecture, PX spans 68 to 176; the sequence is AKDTVQVELI…KLFLSFSGSD (109 aa). Residues R104, K130, and R143 each coordinate a 1,2-diacyl-sn-glycero-3-phospho-(1D-myo-inositol-3-phosphate). T446 carries the phosphothreonine modification. S450 is modified (phosphoserine).

This sequence belongs to the sorting nexin family.

The protein resides in the early endosome membrane. In terms of biological role, may be involved in several stages of intracellular trafficking. May play a role in intracellular protein transport from early endosomes to the trans-Golgi network. The chain is Sorting nexin-8 (Snx8) from Mus musculus (Mouse).